The chain runs to 254 residues: PSME3-interacting protein (254 aa).

Methionine 1 carries the post-translational modification N-acetylmethionine. Serine 17 is modified (phosphoserine). Basic and acidic residues predominate over residues 22–39 (DERRKRRQEEWEKVRKPE). The tract at residues 22–52 (DERRKRRQEEWEKVRKPEDPEECPEEVYDPR) is disordered. An N6-acetyllysine modification is found at lysine 139. Residues 155–195 (GAVKHKSSESGNSVKRLKPDPEPDDKNQEPSSCKSLGNTSL) form a disordered region. Over residues 171–182 (LKPDPEPDDKNQ) the composition is skewed to basic and acidic residues. The span at 183-195 (EPSSCKSLGNTSL) shows a compositional bias: polar residues. The interaction with PSME3 stretch occupies residues 201 to 254 (HCPSAAVCIGILPGLGAYSGSSDSESSSDSEGTINATGKIVSSIFRTNTFLEAP). A phosphoserine; by CK2 mark is found at serine 222 and serine 228.

In terms of assembly, interacts (via C-terminus) with both free and 20S proteasome-bound forms of the proteasome activator complex subunit PSME3; the interaction is direct. Post-translationally, phosphorylation by CK2 stabilizes the interaction with PSME3.

It localises to the nucleus. In terms of biological role, promotes the association of the proteasome activator complex subunit PSME3 with the 20S proteasome and regulates its activity. Inhibits PSME3-mediated degradation of some proteasome substrates, probably by affecting their diffusion rate into the catalytic chamber of the proteasome. Also inhibits the interaction of PSME3 with COIL, inhibits accumulation of PSME3 in Cajal bodies and positively regulates the number of Cajal bodies in the nucleus. In Homo sapiens (Human), this protein is PSME3-interacting protein.